A 582-amino-acid chain; its full sequence is Colicin-E9 (582 aa).

Disordered regions lie at residues 1–74 (MSGG…SGGG), 246–270 (SPGV…NTRD), 294–321 (PDQV…EAAE), 422–489 (ADAA…IADK), and 510–542 (SKDP…QQVG). The span at 20–35 (INGGPTGIGVSGGASD) shows a compositional bias: gly residues. Over residues 36–45 (GSGWSSENNP) the composition is skewed to low complexity. The segment covering 46 to 74 (WGGGSGSGIHWGGGSGRGNGGGNGNSGGG) has biased composition (gly residues). 3 stretches are compositionally biased toward basic and acidic residues: residues 297 to 321 (VKQR…EAAE), 430 to 453 (QERR…ESKR), and 465 to 476 (PVGDKWLDDAGK). Over residues 516-529 (SKNLNPSNKSSVSK) the composition is skewed to low complexity. H550, H575, and H579 together coordinate Zn(2+).

This sequence belongs to the colicin/pyosin nuclease family.

Functionally, this plasmid-coded bactericidal protein is an endonuclease active on both single- and double-stranded DNA but with undefined specificity. Its function is as follows. Colicins are polypeptide toxins produced by and active against E.coli and closely related bacteria. The chain is Colicin-E9 (col) from Escherichia coli.